The chain runs to 189 residues: GTP cyclohydrolase 1 (189 aa).

Zn(2+)-binding residues include C78, H81, and C150.

This sequence belongs to the GTP cyclohydrolase I family. In terms of assembly, homomer.

The enzyme catalyses GTP + H2O = 7,8-dihydroneopterin 3'-triphosphate + formate + H(+). It functions in the pathway cofactor biosynthesis; 7,8-dihydroneopterin triphosphate biosynthesis; 7,8-dihydroneopterin triphosphate from GTP: step 1/1. The protein is GTP cyclohydrolase 1 of Bacillus mycoides (strain KBAB4) (Bacillus weihenstephanensis).